The chain runs to 805 residues: Transforming acidic coiled-coil-containing protein 1 (805 aa).

Ala-2 carries the N-acetylalanine modification. A lipid anchor (N-myristoyl glycine) is attached at Ala-2. Residues 2-55 (AFSPWQILSPVQWAKWTWSAVRGGAAGEDEAGGPEGDPEEEDSQAETKSLSFSS) are interaction with LSM7 and SNRPG. Ser-4, Ser-10, and Ser-44 each carry phosphoserine. The disordered stretch occupies residues 23–140 (RGGAAGEDEA…SVKNFREEPE (118 aa)). A compositionally biased stretch (acidic residues) spans 28–45 (GEDEAGGPEGDPEEEDSQ). Polar residues-rich tracts occupy residues 47-60 (ETKS…SEGN) and 111-128 (SKTC…QAID). Positions 130-140 (HSVKNFREEPE) are enriched in basic and acidic residues. Ser-147 and Ser-153 each carry phosphoserine. Residues 152-259 (FSIETKDSTD…TNAAVEGTPL (108 aa)) form an interaction with TDRD7 region. The interval 206 to 427 (EASAEADLKA…DPDNFDESMD (222 aa)) is interaction with YEATS4. SPAZ domains lie at 215–297 (AGNS…TPGT) and 359–507 (SKSA…TDEE). Positions 215-457 (AGNSCPELVP…VNEILESPKK (243 aa)) are disordered. The short motif at 226–241 (RRSKLRKPKPVPLRKK) is the Bipartite nuclear localization signal 1 element. Positions 226 to 242 (RRSKLRKPKPVPLRKKA) are enriched in basic residues. Ser-228 bears the Phosphoserine; by AURKC mark. Ser-248 and Ser-276 each carry phosphoserine. Composition is skewed to polar residues over residues 296 to 305 (GTLSSDTNDS), 377 to 413 (LSQT…SSEG), and 431 to 447 (PTTT…TGNH). Phosphoserine is present on residues Ser-381 and Ser-406. The Bipartite nuclear localization signal 2 motif lies at 455–471 (PKKAKSRLITSGCKVKK). Ser-483 is modified (phosphoserine). A disordered region spans residues 493–526 (ISDISNRDGHATDEEKLASTSCGQKSAGAEVKGE). A compositionally biased stretch (basic and acidic residues) spans 497–509 (SNRDGHATDEEKL). Residue Tyr-533 is modified to Phosphotyrosine. Ser-591 is subject to Phosphoserine. Residues 610–805 (IREEIITKEI…ELIAKLGKTD (196 aa)) adopt a coiled-coil conformation. The tract at residues 701 to 805 (VLEGFKKNEE…ELIAKLGKTD (105 aa)) is interaction with CH-TOG.

It belongs to the TACC family. As to quaternary structure, interacts with KIAA0097/CH-TOG and with the oncogenic transcription factor YEATS4. Interacts with AURKA, AURKB and AURKC. Interacts with LSM7, TDRD7 and SNRPG. Interacts with GCN5L2 and PCAF. Interacts with the thyroid hormone receptors THRB and THRA, predominantly with isoform alpha-2. The interaction with THRA isoform alpha-1 and THRB is decreased in the presence of thyroid hormone T3. Also interacts with other nuclear receptors, including ESR1, NR3C1, PPARG, RARA and RXRA, preferentially in the absence of their hormonal ligands. Isoform 1 is heavily phosphorylated; isoform 6 is not. Isoform 1, isoform 3 and isoform 5 are ubiquitous. Isoform 2 is strongly expressed in the brain, weakly detectable in lung and colon, and overexpressed in gastric cancer. Isoform 4 is not detected in normal tissues, but strong expression was found in gastric cancer tissues. Down-regulated in a subset of cases of breast cancer.

The protein resides in the cytoplasm. The protein localises to the nucleus. It is found in the cytoskeleton. Its subcellular location is the microtubule organizing center. It localises to the centrosome. The protein resides in the midbody. The protein localises to the membrane. Involved in transcription regulation induced by nuclear receptors, including in T3 thyroid hormone and all-trans retinoic acid pathways. Might promote the nuclear localization of the receptors. Likely involved in the processes that promote cell division prior to the formation of differentiated tissues. The polypeptide is Transforming acidic coiled-coil-containing protein 1 (TACC1) (Homo sapiens (Human)).